The chain runs to 493 residues: Lysine--tRNA ligase (493 aa).

2 residues coordinate Mg(2+): Glu400 and Glu407.

It belongs to the class-II aminoacyl-tRNA synthetase family. Homodimer. Mg(2+) is required as a cofactor.

It is found in the cytoplasm. It carries out the reaction tRNA(Lys) + L-lysine + ATP = L-lysyl-tRNA(Lys) + AMP + diphosphate. The sequence is that of Lysine--tRNA ligase from Syntrophomonas wolfei subsp. wolfei (strain DSM 2245B / Goettingen).